The primary structure comprises 597 residues: Arginine--tRNA ligase (597 aa).

Residues 125 to 135 carry the 'HIGH' region motif; sequence PNTNKPLHLGH.

Belongs to the class-I aminoacyl-tRNA synthetase family. In terms of assembly, monomer.

It is found in the cytoplasm. It catalyses the reaction tRNA(Arg) + L-arginine + ATP = L-arginyl-tRNA(Arg) + AMP + diphosphate. This is Arginine--tRNA ligase from Parabacteroides distasonis (strain ATCC 8503 / DSM 20701 / CIP 104284 / JCM 5825 / NCTC 11152).